We begin with the raw amino-acid sequence, 190 residues long: FPAMPLSNLFANAVLRAQHLYLLAAETYKEFERSYIPEEQRHSNKNSQSAFCYSETIPAPTGKDDAQQKSDMELLRFSLVLVQSWLNPVQFLSRVFTNSLVFGTSDRVFEKLRDLEEGIQALMRELEDGSHRGPQILKPTYEKFDINLRNEDALLKNYGLLSCFKKDLHKVETYLKLMKCRRFGESNCSI.

Histidine 19 lines the Zn(2+) pocket. Cysteine 52 and cysteine 163 are joined by a disulfide. Zn(2+) is bound at residue glutamate 172. Cysteine 180 and cysteine 188 are joined by a disulfide.

This sequence belongs to the somatotropin/prolactin family.

The protein resides in the secreted. Growth hormone plays an important role in growth control and involved in the regulation of several anabolic processes. The sequence is that of Somatotropin (GH) from Crocodylus novaeguineae (Crocodile).